Consider the following 198-residue polypeptide: FMN-dependent NADH:quinone oxidoreductase (198 aa).

Residues Met-92 to Leu-95 and Ser-136 to Gly-139 each bind FMN.

The protein belongs to the azoreductase type 1 family. In terms of assembly, homodimer. Requires FMN as cofactor.

It carries out the reaction 2 a quinone + NADH + H(+) = 2 a 1,4-benzosemiquinone + NAD(+). It catalyses the reaction N,N-dimethyl-1,4-phenylenediamine + anthranilate + 2 NAD(+) = 2-(4-dimethylaminophenyl)diazenylbenzoate + 2 NADH + 2 H(+). In terms of biological role, quinone reductase that provides resistance to thiol-specific stress caused by electrophilic quinones. Also exhibits azoreductase activity. Catalyzes the reductive cleavage of the azo bond in aromatic azo compounds to the corresponding amines. The chain is FMN-dependent NADH:quinone oxidoreductase from Clostridium perfringens (strain ATCC 13124 / DSM 756 / JCM 1290 / NCIMB 6125 / NCTC 8237 / Type A).